The chain runs to 324 residues: Beta-ketoacyl-[acyl-carrier-protein] synthase III (324 aa).

Active-site residues include Cys114 and His251. An ACP-binding region spans residues 252-256 (QANKR). Asn281 is an active-site residue.

Belongs to the thiolase-like superfamily. FabH family. In terms of assembly, homodimer.

The protein resides in the cytoplasm. The catalysed reaction is malonyl-[ACP] + acetyl-CoA + H(+) = 3-oxobutanoyl-[ACP] + CO2 + CoA. It functions in the pathway lipid metabolism; fatty acid biosynthesis. In terms of biological role, catalyzes the condensation reaction of fatty acid synthesis by the addition to an acyl acceptor of two carbons from malonyl-ACP. Catalyzes the first condensation reaction which initiates fatty acid synthesis and may therefore play a role in governing the total rate of fatty acid production. Possesses both acetoacetyl-ACP synthase and acetyl transacylase activities. Its substrate specificity determines the biosynthesis of branched-chain and/or straight-chain of fatty acids. The chain is Beta-ketoacyl-[acyl-carrier-protein] synthase III from Bradyrhizobium sp. (strain BTAi1 / ATCC BAA-1182).